The primary structure comprises 785 residues: AP-1 complex subunit gamma-like 2 (785 aa).

Residues 369 to 379 (LSLALVNSSNV) are essential for ubiquitin-binding. The interval 592 to 617 (GPQADEEAKESKEAAQLSEAAPVPTE) is disordered. A GAE domain is found at 665–780 (APIPDLKVFE…QEIFEVNNLP (116 aa)).

Belongs to the adaptor complexes large subunit family. As to quaternary structure, may interact with AP1S1/Sigma1A-adaptin and AP1S2/Sigma1B-adaptin. Probably does not interact with APB1. Interacts (via GAE domain) with RABEP1, NECAP1, CLINT1 and AFTPH/aftiphilin. (Microbial infection) Interacts with HBV major surface antigen L. Interacts with HBV core protein C in a ubiquitin-dependent manner. Expressed in all but one (skeletal muscle) tissues examined.

The protein localises to the golgi apparatus membrane. It localises to the cytoplasmic vesicle membrane. Its subcellular location is the endosome membrane. Its function is as follows. May function in protein sorting in late endosomes or multivesucular bodies (MVBs). In terms of biological role, (Microbial infection) Involved in MVB-assisted maturation of hepatitis B virus (HBV). In Homo sapiens (Human), this protein is AP-1 complex subunit gamma-like 2 (AP1G2).